Here is a 542-residue protein sequence, read N- to C-terminus: Neurofilament light polypeptide (542 aa).

S2 carries the post-translational modification N-acetylserine. The head stretch occupies residues 2 to 93; it reads SSFSYEPYFS…KSIRTQEKAQ (92 aa). The O-linked (GlcNAc) threonine glycan is linked to T21. Asymmetric dimethylarginine; alternate is present on R23. The residue at position 23 (R23) is an Omega-N-methylarginine; alternate. The O-linked (GlcNAc) serine glycan is linked to S27. Position 30 is an omega-N-methylarginine (R30). Y43 is modified (phosphotyrosine). Phosphoserine is present on residues S56, S67, and S103. An IF rod domain is found at 90 to 401; that stretch reads EKAQLQDLND…KLLEGEETRL (312 aa). The tract at residues 94 to 125 is coil 1A; that stretch reads LQDLNDRFASFIERVHELEQQNKVLEAELLVL. The interval 126–138 is linker 1; sequence RQKHSEPSRFRAL. A coil 1B region spans residues 139–234; that stretch reads YEQEIRDLRL…KVHEEEIAEL (96 aa). Residues 235-253 are linker 12; sequence QAQIQYAQISVEMDVSSKP. The segment at 254–272 is coil 2A; sequence DLSAALKDIRAQYEKLAAK. The linker 2 stretch occupies residues 273–281; the sequence is NMQNAEEWF. The coil 2B stretch occupies residues 282 to 397; that stretch reads KSRFTVLTES…AAYRKLLEGE (116 aa). The epitope; recognized by IF-specific monoclonal antibody stretch occupies residues 382–392; it reads ALDIEIAAYRK. Residues 398-444 form a tail, subdomain A region; sequence ETRLSFTSVGSITSGYSQSSQVFGRSAYSGLQSSSYLMSARAFPAYY. Residues 398 to 542 form a tail region; sequence ETRLSFTSVG…GEEQAAKKKD (145 aa). Positions 445 to 542 are tail, subdomain B (acidic); the sequence is TSHVQEEQSE…GEEQAAKKKD (98 aa). Residues 451–542 are disordered; that stretch reads EQSEVEETIE…GEEQAAKKKD (92 aa). Phosphoserine is present on S453. Residues 460 to 471 show a composition bias toward basic and acidic residues; it reads EATKAEEAKDEP. The segment covering 472–527 has biased composition (acidic residues); the sequence is PSEGEAEEEEKEKEEGEEEEGAEEEEAAKDESEDAKEEEGGEGEEEDTKESEEEEK. 2 positions are modified to phosphoserine: S473 and S503. T519 is modified (phosphothreonine). Phosphoserine is present on residues S522 and S531. The span at 528–542 shows a compositional bias: basic and acidic residues; that stretch reads KEESAGEEQAAKKKD.

The protein belongs to the intermediate filament family. In terms of assembly, forms homodimers (in vitro). Forms heterodimers with NEFH or NEFM; which can further hetero-oligomerize (in vitro). Forms heterodimers with INA (in vitro). Interacts with ARHGEF28. Interacts with TRIM2. In terms of processing, O-glycosylated; contains three N-acetylglucosamine side chains. Phosphorylated in the head and rod regions by the PKC kinase PKN1, leading to the inhibition of polymerization. Post-translationally, ubiquitinated in the presence of TRIM2 and UBE2D1. Expressed in the dorsal root ganglion neurons (at protein level).

The protein localises to the cell projection. It localises to the axon. It is found in the cytoplasm. Its subcellular location is the cytoskeleton. Neurofilaments usually contain three intermediate filament proteins: NEFL, NEFM, and NEFH which are involved in the maintenance of neuronal caliber. May additionally cooperate with the neuronal intermediate filament proteins PRPH and INA to form neuronal filamentous networks. In Rattus norvegicus (Rat), this protein is Neurofilament light polypeptide (Nefl).